Consider the following 634-residue polypeptide: Knob-associated histidine-rich protein (634 aa).

The N-terminal stretch at 1-34 (MKSFKNKNTLRRKKAFPVFTKILLVSFLVWVLKC) is a signal peptide. N-linked (GlcNAc...) asparagine glycosylation occurs at Asn-42. A compositionally biased stretch (basic residues) spans 57-87 (AQKQHEHHHHHHHQHQHQHQAPHQAHHHHHH). Disordered stretches follow at residues 57–143 (AQKQ…QVFR) and 347–634 (SSVN…GCCG). Positions 95 to 104 (PQVHQQVHGQ) are enriched in low complexity. Positions 108-117 (HHHHHHHHHQ) are enriched in basic residues. Composition is skewed to basic and acidic residues over residues 354–375 (KHGD…EGEK) and 396–405 (KDNEDAESVK). The segment covering 406–422 (SKKHKSHDCEKKKSKKH) has biased composition (basic residues). Composition is skewed to basic and acidic residues over residues 423–444 (KDNE…GEKH) and 453–493 (KTNE…KKVD). Positions 494–505 (STSADNKSTNAA) are enriched in polar residues. The segment covering 509–520 (AKDKTQGGKTDK) has biased composition (basic and acidic residues). 4 consecutive repeat copies span residues 540–549 (TKGATKEAST), 550–559 (SKEATKEAST), 560–569 (SKGATKEAST), and 570–579 (TEGATKGAST). Positions 540–580 (TKGATKEASTSKEATKEASTSKGATKEASTTEGATKGASTT) are 4 X 10 AA tandem repeats of [TS]-[KE]-[GE]-A-T-K-[EG]-A-S-T. Residues 567 to 591 (ASTTEGATKGASTTAGSTTGATTGA) are compositionally biased toward low complexity. The segment covering 605-620 (AANNGEQVMSRGQAQL) has biased composition (polar residues). The segment covering 625-634 (KKKKKRGCCG) has biased composition (basic residues).

It localises to the secreted. In terms of biological role, KAHRP might mimick human histidine-rich glycoproteins to anchor host thrombospondin or a parasite analog in a binding complex with the endothelial cell receptor. The sequence is that of Knob-associated histidine-rich protein from Plasmodium falciparum (isolate FCR-3 / Gambia).